Reading from the N-terminus, the 488-residue chain is Acetyl-coenzyme A carboxylase carboxyl transferase subunit beta, chloroplastic (488 aa).

Residues Leu227–Asn488 form the CoA carboxyltransferase N-terminal domain. 4 residues coordinate Zn(2+): Cys231, Cys234, Cys247, and Cys250. Residues Cys231 to Cys250 form a C4-type zinc finger.

It belongs to the AccD/PCCB family. As to quaternary structure, acetyl-CoA carboxylase is a heterohexamer composed of biotin carboxyl carrier protein, biotin carboxylase and 2 subunits each of ACCase subunit alpha and ACCase plastid-coded subunit beta (accD). The cofactor is Zn(2+). Accumulates in fatty acids synthesizing tissues such as embryos, expanding leaves, flower buds, flowers, and developing siliques.

It is found in the plastid. The protein resides in the chloroplast membrane. The protein localises to the chloroplast stroma. The catalysed reaction is N(6)-carboxybiotinyl-L-lysyl-[protein] + acetyl-CoA = N(6)-biotinyl-L-lysyl-[protein] + malonyl-CoA. It participates in lipid metabolism; malonyl-CoA biosynthesis; malonyl-CoA from acetyl-CoA: step 1/1. In terms of biological role, component of the acetyl coenzyme A carboxylase (ACC) complex. Biotin carboxylase (BC) catalyzes the carboxylation of biotin on its carrier protein (BCCP) and then the CO(2) group is transferred by the transcarboxylase to acetyl-CoA to form malonyl-CoA. This Arabidopsis thaliana (Mouse-ear cress) protein is Acetyl-coenzyme A carboxylase carboxyl transferase subunit beta, chloroplastic.